We begin with the raw amino-acid sequence, 355 residues long: Tyrosine recombinase XerC (355 aa).

Positions 4 to 89 (TQFDGDIDSF…AVRGFFAWAY (86 aa)) constitute a Core-binding (CB) domain. The disordered stretch occupies residues 137–181 (KDDGGAAAAPGSGKAAGKTADKSADTVNRSEAPARADKRDNARVT). Positions 141–154 (GAAAAPGSGKAAGK) are enriched in low complexity. The Tyr recombinase domain maps to 158–349 (KSADTVNRSE…SIEQLKNRYG (192 aa)). Basic and acidic residues predominate over residues 168–178 (APARADKRDNA). Catalysis depends on residues Arg-200, Lys-224, His-301, Arg-304, and His-327. Residue Tyr-336 is the O-(3'-phospho-DNA)-tyrosine intermediate of the active site.

The protein belongs to the 'phage' integrase family. XerC subfamily. As to quaternary structure, forms a cyclic heterotetrameric complex composed of two molecules of XerC and two molecules of XerD.

The protein resides in the cytoplasm. Functionally, site-specific tyrosine recombinase, which acts by catalyzing the cutting and rejoining of the recombining DNA molecules. The XerC-XerD complex is essential to convert dimers of the bacterial chromosome into monomers to permit their segregation at cell division. It also contributes to the segregational stability of plasmids. This is Tyrosine recombinase XerC from Bifidobacterium longum (strain DJO10A).